A 619-amino-acid chain; its full sequence is Dihydroxy-acid dehydratase (619 aa).

Aspartate 81 is a Mg(2+) binding site. Residue cysteine 122 coordinates [2Fe-2S] cluster. 2 residues coordinate Mg(2+): aspartate 123 and lysine 124. N6-carboxylysine is present on lysine 124. Cysteine 201 serves as a coordination point for [2Fe-2S] cluster. A Mg(2+)-binding site is contributed by glutamate 496. The Proton acceptor role is filled by serine 522.

Belongs to the IlvD/Edd family. In terms of assembly, homodimer. [2Fe-2S] cluster serves as cofactor. Mg(2+) is required as a cofactor.

It catalyses the reaction (2R)-2,3-dihydroxy-3-methylbutanoate = 3-methyl-2-oxobutanoate + H2O. The enzyme catalyses (2R,3R)-2,3-dihydroxy-3-methylpentanoate = (S)-3-methyl-2-oxopentanoate + H2O. It functions in the pathway amino-acid biosynthesis; L-isoleucine biosynthesis; L-isoleucine from 2-oxobutanoate: step 3/4. Its pathway is amino-acid biosynthesis; L-valine biosynthesis; L-valine from pyruvate: step 3/4. In terms of biological role, functions in the biosynthesis of branched-chain amino acids. Catalyzes the dehydration of (2R,3R)-2,3-dihydroxy-3-methylpentanoate (2,3-dihydroxy-3-methylvalerate) into 2-oxo-3-methylpentanoate (2-oxo-3-methylvalerate) and of (2R)-2,3-dihydroxy-3-methylbutanoate (2,3-dihydroxyisovalerate) into 2-oxo-3-methylbutanoate (2-oxoisovalerate), the penultimate precursor to L-isoleucine and L-valine, respectively. This chain is Dihydroxy-acid dehydratase, found in Burkholderia vietnamiensis (strain G4 / LMG 22486) (Burkholderia cepacia (strain R1808)).